The primary structure comprises 66 residues: Hemicalcin (66 aa).

Positions 1-21 (MRASLFIVIFVVSFITISCLS) are cleaved as a signal peptide. Residues 22-33 (TDDEEARWIEKR) constitute a propeptide that is removed on maturation. 3 cysteine pairs are disulfide-bonded: Cys-36–Cys-50, Cys-43–Cys-54, and Cys-49–Cys-65. Residues 55–57 (KRR) are essential for stimulation of [3H]ryanodine binding to RYR1.

Belongs to the scorpion calcin family. Expressed by the venom gland.

Its subcellular location is the secreted. This toxin stabilizes ryanodine receptor 1 (RyR1) opening in a long-lasting subconductance state (20% and 38% of the full conductance state have been found). It promotes an increase in the opening probability at intermediate concentration. Furthermore, it triggers calcium release from sarcoplasmic vesicles (68 nM are enough to induce a sharp release, and 45% of the total calcium is released after toxin (100 nM) addition) probably by acting as a cell-penetrating peptide (CPP). In addition, it has been shown to dose-dependently stimulate ryanodine binding to RyR1 (EC(50)=6.9-71 nM). It also augments the bell-shaped calcium-[3H]ryanodine binding curve that is maximal at about 10 uM calcium concentration. It binds a different site as ryanodine. It acts synergistically with caffeine. In vivo, intracerebroventricular injection into mice induces neurotoxic symptoms, followed by death. The protein is Hemicalcin of Hemiscorpius lepturus (Scorpion).